The following is a 435-amino-acid chain: D-inositol 3-phosphate glycosyltransferase (435 aa).

Histidine 16 is a binding site for 1D-myo-inositol 3-phosphate. Residues 22-23 (QP) and glycine 30 each bind UDP-N-acetyl-alpha-D-glucosamine. 1D-myo-inositol 3-phosphate contacts are provided by residues 27–32 (DAGGMN), lysine 85, tyrosine 118, threonine 142, and arginine 162. Residues arginine 237, lysine 242, and valine 303 each contribute to the UDP-N-acetyl-alpha-D-glucosamine site. Mg(2+) contacts are provided by tyrosine 312, arginine 313, and alanine 315. Glutamate 325 and glutamate 333 together coordinate UDP-N-acetyl-alpha-D-glucosamine. Threonine 339 contributes to the Mg(2+) binding site.

It belongs to the glycosyltransferase group 1 family. MshA subfamily. Homodimer.

The catalysed reaction is 1D-myo-inositol 3-phosphate + UDP-N-acetyl-alpha-D-glucosamine = 1D-myo-inositol 2-acetamido-2-deoxy-alpha-D-glucopyranoside 3-phosphate + UDP + H(+). Its function is as follows. Catalyzes the transfer of a N-acetyl-glucosamine moiety to 1D-myo-inositol 3-phosphate to produce 1D-myo-inositol 2-acetamido-2-deoxy-glucopyranoside 3-phosphate in the mycothiol biosynthesis pathway. The polypeptide is D-inositol 3-phosphate glycosyltransferase (Kineococcus radiotolerans (strain ATCC BAA-149 / DSM 14245 / SRS30216)).